Here is a 340-residue protein sequence, read N- to C-terminus: Putative esterase YheT (340 aa).

The region spanning 73-312 (PRLVVFHGLE…TEHGGHVGFI (240 aa)) is the AB hydrolase-1 domain. Active-site charge relay system residues include Ser-153, Asp-280, and His-308.

Belongs to the AB hydrolase superfamily. AB hydrolase 4 family.

The chain is Putative esterase YheT (yheT) from Escherichia coli (strain K12).